A 217-amino-acid chain; its full sequence is MNKILFTAVEARVVGCLLEKQVTTPDQYPMSLNGVVTACNQKSNREPVMSLTDSEVQNTLDMLVKKHQLTALNTGSRVVKYEQRFCNSTFGQMKLSAAEVAIIANLLLRGAQTPGELRIRCARIHDFADMTEVEQTLERLAQHEHGQLVVRLAREPGKRESRYMHLLSGEVDESSRADGHHPDDHRGDLEGRIAQLEQQVATLQRQIAQLLNNGEVK.

The interval Gly169–Asp188 is disordered. Basic and acidic residues predominate over residues Glu173 to Asp188.

Belongs to the UPF0502 family.

The polypeptide is UPF0502 protein ETA_20480 (Erwinia tasmaniensis (strain DSM 17950 / CFBP 7177 / CIP 109463 / NCPPB 4357 / Et1/99)).